A 164-amino-acid polypeptide reads, in one-letter code: ATP synthase subunit b (164 aa).

Residues 6 to 26 (GELVGNFILVTGSVIVLLLLI) traverse the membrane as a helical segment.

This sequence belongs to the ATPase B chain family. As to quaternary structure, F-type ATPases have 2 components, F(1) - the catalytic core - and F(0) - the membrane proton channel. F(1) has five subunits: alpha(3), beta(3), gamma(1), delta(1), epsilon(1). F(0) has three main subunits: a(1), b(2) and c(10-14). The alpha and beta chains form an alternating ring which encloses part of the gamma chain. F(1) is attached to F(0) by a central stalk formed by the gamma and epsilon chains, while a peripheral stalk is formed by the delta and b chains.

The protein localises to the cell membrane. In terms of biological role, f(1)F(0) ATP synthase produces ATP from ADP in the presence of a proton or sodium gradient. F-type ATPases consist of two structural domains, F(1) containing the extramembraneous catalytic core and F(0) containing the membrane proton channel, linked together by a central stalk and a peripheral stalk. During catalysis, ATP synthesis in the catalytic domain of F(1) is coupled via a rotary mechanism of the central stalk subunits to proton translocation. Its function is as follows. Component of the F(0) channel, it forms part of the peripheral stalk, linking F(1) to F(0). The chain is ATP synthase subunit b from Streptococcus pyogenes serotype M12 (strain MGAS2096).